A 198-amino-acid polypeptide reads, in one-letter code: Cyclin-dependent kinase inhibitor 1B (198 aa).

Positions 1–11 are enriched in polar residues; the sequence is MSNVRVSNGSP. The disordered stretch occupies residues 1 to 34; it reads MSNVRVSNGSPSLERMDARQAEHPKPSACRNLFG. Ser10 bears the Phosphoserine; by UHMK1 mark. Residues 14 to 25 are compositionally biased toward basic and acidic residues; it reads ERMDARQAEHPK. An interaction with CDK2 region spans residues 51–91; the sequence is DMEEASQRKWNFDFQNHNPLEGRYQWQEVDKGSLPEFYYRP. A Phosphotyrosine; by SRC modification is found at Tyr74. The interval 85 to 198 is disordered; sequence PEFYYRPPRP…KKPGLRRHQT (114 aa). Position 88 is a phosphotyrosine; by ABL, LYN and SRC (Tyr88). Tyr89 is modified (phosphotyrosine). Residues 104–124 show a composition bias toward polar residues; it reads QESQDVSGSRQAVPSIGSQAY. The Nuclear localization signal motif lies at 153–169; the sequence is KRPAADDSSSQNKRANR. Thr170 is subject to Phosphothreonine. The span at 175–186 shows a compositional bias: polar residues; that stretch reads SDGSLNAGSVEQ. Thr187 is modified (phosphothreonine; by PKB/AKT1, CDK1 and CDK2). The residue at position 198 (Thr198) is a Phosphothreonine; by CaMK1, PKB/AKT1, RPS6KA1, RPS6KA3 and PIM1.

This sequence belongs to the CDI family. In terms of assembly, forms a ternary complex composed of CCNE1, CDK2 and CDKN1B. Interacts directly with CCNE1; the interaction is inhibited by CDK2-dependent phosphorylation on Thr-187. Interacts with COPS5, subunit of the COP9 signalosome complex; the interaction leads to CDKN1B degradation. Interacts with NUP50; the interaction leads to nuclear import and degradation of phosphorylated CDKN1B. Interacts with CCND1 and SNX6. Interacts (Thr-198-phosphorylated form) with 14-3-3 proteins, binds strongly YWHAQ, weakly YWHAE and YWHAH, but not YWHAB nor YWHAZ; the interaction with YWHAQ results in translocation to the cytoplasm. Interacts with AKT1 and LYN; the interactions lead to cytoplasmic mislocation, phosphorylation of CDKN1B and inhibition of cell cycle arrest. Forms a ternary complex with CCNA2 and CDK2; CDKN1B inhibits the kinase activity of CDK2 through conformational rearrangements. Interacts (unphosphorylated form) with CDK2. Forms a complex with CDK2 and SPDYA, but does not directly interact with SPDYA. Forms a ternary complex composed of cyclin D, CDK4 and CDKN1B. Interacts (phosphorylated on Tyr-88 and Tyr-89) with CDK4; the interaction is required for cyclin D and CDK4 complex assembly, induces nuclear translocation and activates the CDK4 kinase activity. Interacts with GRB2. Interacts with PIM1. Identified in a complex with SKP1, SKP2 and CKS1B. Interacts with UHMK1; the interaction leads to cytoplasmic mislocation, phosphorylation of CDKN1B and inhibition of cell cycle arrest. Also interacts with CDK1. Dephosphorylated on Thr-187 by PPM1H, leading to CDKN1B stability. Phosphorylated; phosphorylation occurs on serine, threonine and tyrosine residues. Phosphorylation on Ser-10 is the major site of phosphorylation in resting cells, takes place at the G(0)-G(1) phase and leads to protein stability. Phosphorylation on other sites is greatly enhanced by mitogens, growth factors, cMYC and in certain cancer cell lines. The phosphorylated form found in the cytoplasm is inactivate. Phosphorylation on Thr-198 is required for interaction with 14-3-3 proteins. Phosphorylation on Thr-187, by CDK1 and CDK2 leads to protein ubiquitination and proteasomal degradation. Tyrosine phosphorylation promotes this process. Phosphorylation by PKB/AKT1 can be suppressed by LY294002, an inhibitor of the catalytic subunit of PI3K. Phosphorylation on Tyr-88 and Tyr-89 has no effect on binding CDK2, but is required for binding CDK4. Dephosphorylated on tyrosine residues by G-CSF. Dephosphorylated on Thr-187 by PPM1H, leading to CDKN1B stability. Post-translationally, ubiquitinated; in the cytoplasm by the KPC complex (composed of RNF123/KPC1 and UBAC1/KPC2) and, in the nucleus, by SCF(SKP2). The latter requires prior phosphorylation on Thr-187. Ubiquitinated; by a TRIM21-containing SCF(SKP2)-like complex; leads to its degradation. In terms of processing, subject to degradation in the lysosome. Interaction with SNX6 promotes lysosomal degradation.

The protein resides in the nucleus. The protein localises to the cytoplasm. It localises to the endosome. In terms of biological role, important regulator of cell cycle progression. Inhibits the kinase activity of CDK2 bound to cyclin A, but has little inhibitory activity on CDK2 bound to SPDYA. Involved in G1 arrest. Potent inhibitor of cyclin E- and cyclin A-CDK2 complexes. Forms a complex with cyclin type D-CDK4 complexes and is involved in the assembly, stability, and modulation of CCND1-CDK4 complex activation. Acts either as an inhibitor or an activator of cyclin type D-CDK4 complexes depending on its phosphorylation state and/or stoichometry. This Cricetulus griseus (Chinese hamster) protein is Cyclin-dependent kinase inhibitor 1B (CDKN1B).